We begin with the raw amino-acid sequence, 176 residues long: ATP-dependent protease subunit HslV (176 aa).

The active site involves T5. 3 residues coordinate Na(+): A161, C164, and T167.

It belongs to the peptidase T1B family. HslV subfamily. A double ring-shaped homohexamer of HslV is capped on each side by a ring-shaped HslU homohexamer. The assembly of the HslU/HslV complex is dependent on binding of ATP.

The protein localises to the cytoplasm. It carries out the reaction ATP-dependent cleavage of peptide bonds with broad specificity.. Its activity is regulated as follows. Allosterically activated by HslU binding. Functionally, protease subunit of a proteasome-like degradation complex believed to be a general protein degrading machinery. This is ATP-dependent protease subunit HslV from Pelotomaculum thermopropionicum (strain DSM 13744 / JCM 10971 / SI).